The following is a 392-amino-acid chain: MIIHSLLDTDLYKFTMMQAVLHQHPAAQVDYRFKCRTPGVDLAQFIDEISREIDALCRLRLREDEVDYLRSLRFIKPDFADFLALFHLDRKYLSLTASATHPGEIELTIRGPWLHTILFEVPLLAIINEVWFRNTSEPDFEEGRSRLREKVASLRSMPAGCKIADYGTRRRYSRQWHGELLPLLRDGLGEQFVGTSNVYFAKQYGLTPLGTMAHEYLQAFQALGPRLRDSQVAALESWAREYRGDLGIALSDVVGLDAFLRDFDLYFCKLFDGMRHDSGDPFEWGERVIAHLEAHRVDPRTKVLVFSDGLNIDKVMRLYQHFHTRCRLAFGVGTSLTNDLGPTPLQIVIKMVRCNGQPVAKLSDSPGKSMCEDIGYLRYLRDVFGLPPMAET.

H214 bears the Phosphohistidine; by autocatalysis mark.

The protein belongs to the NAPRTase family. In terms of processing, transiently phosphorylated on a His residue during the reaction cycle. Phosphorylation strongly increases the affinity for substrates and increases the rate of nicotinate D-ribonucleotide production. Dephosphorylation regenerates the low-affinity form of the enzyme, leading to product release.

The enzyme catalyses nicotinate + 5-phospho-alpha-D-ribose 1-diphosphate + ATP + H2O = nicotinate beta-D-ribonucleotide + ADP + phosphate + diphosphate. The protein operates within cofactor biosynthesis; NAD(+) biosynthesis; nicotinate D-ribonucleotide from nicotinate: step 1/1. Functionally, catalyzes the synthesis of beta-nicotinate D-ribonucleotide from nicotinate and 5-phospho-D-ribose 1-phosphate at the expense of ATP. This chain is Nicotinate phosphoribosyltransferase, found in Xanthomonas axonopodis pv. citri (strain 306).